The following is a 159-amino-acid chain: 2-C-methyl-D-erythritol 2,4-cyclodiphosphate synthase (159 aa).

Positions 10 and 12 each coordinate a divalent metal cation. Residues 10 to 12 and 37 to 38 contribute to the 4-CDP-2-C-methyl-D-erythritol 2-phosphate site; these read DVH and HS. H45 contributes to the a divalent metal cation binding site. Residues 59 to 61, 64 to 68, 103 to 109, 135 to 138, F142, and R145 each bind 4-CDP-2-C-methyl-D-erythritol 2-phosphate; these read DIG, FLDTD, AQAPKML, and TTTE.

Belongs to the IspF family. In terms of assembly, homotrimer. Requires a divalent metal cation as cofactor.

The enzyme catalyses 4-CDP-2-C-methyl-D-erythritol 2-phosphate = 2-C-methyl-D-erythritol 2,4-cyclic diphosphate + CMP. It participates in isoprenoid biosynthesis; isopentenyl diphosphate biosynthesis via DXP pathway; isopentenyl diphosphate from 1-deoxy-D-xylulose 5-phosphate: step 4/6. Involved in the biosynthesis of isopentenyl diphosphate (IPP) and dimethylallyl diphosphate (DMAPP), two major building blocks of isoprenoid compounds. Catalyzes the conversion of 4-diphosphocytidyl-2-C-methyl-D-erythritol 2-phosphate (CDP-ME2P) to 2-C-methyl-D-erythritol 2,4-cyclodiphosphate (ME-CPP) with a corresponding release of cytidine 5-monophosphate (CMP). This Francisella tularensis subsp. tularensis (strain FSC 198) protein is 2-C-methyl-D-erythritol 2,4-cyclodiphosphate synthase.